Reading from the N-terminus, the 183-residue chain is Translation initiation factor IF-3 (183 aa).

A compositionally biased stretch (polar residues) spans 1–13 (MKQPDRNQQQGAK). A disordered region spans residues 1 to 24 (MKQPDRNQQQGAKSNRPAINDEIR).

Belongs to the IF-3 family. In terms of assembly, monomer.

It is found in the cytoplasm. Functionally, IF-3 binds to the 30S ribosomal subunit and shifts the equilibrium between 70S ribosomes and their 50S and 30S subunits in favor of the free subunits, thus enhancing the availability of 30S subunits on which protein synthesis initiation begins. This chain is Translation initiation factor IF-3, found in Acinetobacter baylyi (strain ATCC 33305 / BD413 / ADP1).